The primary structure comprises 341 residues: uncharacterized protein (341 aa).

It belongs to the cycloisomerase 2 family.

This is an uncharacterized protein from Lactococcus lactis subsp. lactis (strain IL1403) (Streptococcus lactis).